Here is a 251-residue protein sequence, read N- to C-terminus: DNA repair protein RecO (251 aa).

Belongs to the RecO family.

Functionally, involved in DNA repair and RecF pathway recombination. This Albidiferax ferrireducens (strain ATCC BAA-621 / DSM 15236 / T118) (Rhodoferax ferrireducens) protein is DNA repair protein RecO.